Reading from the N-terminus, the 413-residue chain is Low-salt glycan biosynthesis hexosyltransferase Agl6 (413 aa).

Residues 1–27 (MSTRSQSESPVDAPQQGATNGQSASDI) are disordered. Residues 16–25 (QGATNGQSAS) are compositionally biased toward polar residues. The next 4 helical transmembrane spans lie at 270-290 (LFSA…VLAW), 304-324 (TGIG…FGAF), 355-375 (IGSV…FTWV), and 389-409 (VVAT…FLLG).

This sequence belongs to the glycosyltransferase 2 family.

The protein localises to the membrane. It functions in the pathway protein modification; protein glycosylation. Its pathway is cell surface structure biogenesis; S-layer biogenesis. In terms of biological role, hexosyltransferase involved in N-glycan biosynthetic pathway that takes place under low-salt conditions (1.75 M instead of 3.4 M). Participates in the formation of the tetrasaccharide present at 'Asn-532' of S-layer glycoprotein Csg, consisting of a sulfated hexose, 2 hexoses and rhamnose. Together with Agl5, mediates the addition of sugars 1 and 2 to dolichol phosphate in the tetrasaccharide. The polypeptide is Low-salt glycan biosynthesis hexosyltransferase Agl6 (agl6) (Haloferax volcanii (strain ATCC 29605 / DSM 3757 / JCM 8879 / NBRC 14742 / NCIMB 2012 / VKM B-1768 / DS2) (Halobacterium volcanii)).